The following is a 51-amino-acid chain: Astexin-1 (51 aa).

Positions 1-28 (MHTPIISETVQPKTAGLIVLGKASAETR) are excised as a propeptide. Positions 29–37 (GLSQGVEPD) form a cross-link, isoaspartyl glycine isopeptide (Gly-Asp).

Post-translationally, this lasso peptide is probably hydrolyzed to a linear form by the isopeptidase AtxE1, in vivo.

Shows weak antimicrobial activity against its phylogenetic relative Caulobacter crescentus. Does not show activity against other bacteria tested (E.coli, Vibrio sp, Burkhoderia thailandensis, and Salmonella newport). This Asticcacaulis excentricus (strain ATCC 15261 / DSM 4724 / KCTC 12464 / NCIMB 9791 / VKM B-1370 / CB 48) protein is Astexin-1.